The chain runs to 196 residues: Ribonuclease HII (196 aa).

The RNase H type-2 domain occupies 9 to 196 (SLIAGVDEVG…APVKRAIGLK (188 aa)). A divalent metal cation contacts are provided by Asp-15, Glu-16, and Asp-107.

The protein belongs to the RNase HII family. It depends on Mn(2+) as a cofactor. Requires Mg(2+) as cofactor.

The protein resides in the cytoplasm. The catalysed reaction is Endonucleolytic cleavage to 5'-phosphomonoester.. In terms of biological role, endonuclease that specifically degrades the RNA of RNA-DNA hybrids. The protein is Ribonuclease HII of Photorhabdus laumondii subsp. laumondii (strain DSM 15139 / CIP 105565 / TT01) (Photorhabdus luminescens subsp. laumondii).